The following is a 278-amino-acid chain: MKLVVCSESDTAGQNIKDNLLTFADFEEKDVGEFKLYLSDEFYIAETKERLIYADHIDEKLAKYIDFEEILFASRHSSKDGRKIFTVHVSGNVGTADFGGKPYSLAKPSPQTMKNYVLALRERLDRKPEFEFTMEVTHHGPSEISKPSAFYEIGSTEEEWKDREAAEVVAEAMLDAIRAEKMDWNVAVGVGGTHYAPRQTEIMLTTTFTFGHNFAKYTFEHLTAEFLVKAVKLSEAEYIIIDEKSVNSAVKKIVNEAAEVAGVEVLKSKKVKKDFRLV.

It belongs to the DtdA deacylase family. As to quaternary structure, monomer. It depends on Zn(2+) as a cofactor.

The catalysed reaction is a D-aminoacyl-tRNA + H2O = a tRNA + a D-alpha-amino acid + H(+). It carries out the reaction glycyl-tRNA(Ala) + H2O = tRNA(Ala) + glycine + H(+). Its function is as follows. D-aminoacyl-tRNA deacylase with broad substrate specificity. By recycling D-aminoacyl-tRNA to D-amino acids and free tRNA molecules, this enzyme counteracts the toxicity associated with the formation of D-aminoacyl-tRNA entities in vivo. The chain is D-aminoacyl-tRNA deacylase from Archaeoglobus fulgidus (strain ATCC 49558 / DSM 4304 / JCM 9628 / NBRC 100126 / VC-16).